We begin with the raw amino-acid sequence, 376 residues long: Protein XRP2 (376 aa).

Residues M1 to D55 are disordered. G2 carries N-myristoyl glycine lipidation. C3 carries S-palmitoyl cysteine lipidation. The span at E25–A48 shows a compositional bias: polar residues. Positions P49–P204 constitute a C-CAP/cofactor C-like domain. GTP is bound by residues G123–S124 and Q140–R143.

Belongs to the TBCC family. Post-translationally, myristoylated on Gly-2; which may be required for membrane targeting. Palmitoylated on Cys-3; which may be required for plasma membrane targeting. As to expression, in the retina, detected in both rod and cone photoreceptors (at protein level). Has strongest expression in the retinal outer nuclear layer (ONL) and weaker expression in the outer plexiform layer (OPL) and inner plexiform layer (IPL) (at protein level). Expressed in all tissues tested.

It is found in the cell membrane. Its subcellular location is the cell projection. It localises to the cilium. Acts as a GTPase-activating protein (GAP) involved in trafficking between the Golgi and the ciliary membrane. Acts as a GTPase-activating protein (GAP) for tubulin in concert with tubulin-specific chaperone C, but does not enhance tubulin heterodimerization. In the retina, required for maintenance of rod and cone photoreceptor cells. May have a role in normal retinal localization of the transducins GNB1 and GNAT1, and the rhodopsin kinase GRK1. The sequence is that of Protein XRP2 from Danio rerio (Zebrafish).